The following is a 361-amino-acid chain: Chorismate synthase (361 aa).

2 residues coordinate NADP(+): Arg-48 and Arg-54. Residues 125-127, 238-239, Gly-278, 293-297, and Arg-319 each bind FMN; these read RSS, NA, and KPTSS.

It belongs to the chorismate synthase family. As to quaternary structure, homotetramer. It depends on FMNH2 as a cofactor.

The catalysed reaction is 5-O-(1-carboxyvinyl)-3-phosphoshikimate = chorismate + phosphate. Its pathway is metabolic intermediate biosynthesis; chorismate biosynthesis; chorismate from D-erythrose 4-phosphate and phosphoenolpyruvate: step 7/7. Catalyzes the anti-1,4-elimination of the C-3 phosphate and the C-6 proR hydrogen from 5-enolpyruvylshikimate-3-phosphate (EPSP) to yield chorismate, which is the branch point compound that serves as the starting substrate for the three terminal pathways of aromatic amino acid biosynthesis. This reaction introduces a second double bond into the aromatic ring system. The sequence is that of Chorismate synthase from Yersinia pseudotuberculosis serotype IB (strain PB1/+).